Consider the following 575-residue polypeptide: 2-isopropylmalate synthase (575 aa).

Positions 31–305 constitute a Pyruvate carboxyltransferase domain; the sequence is PTWLSTDLRD…APGLDFSDIA (275 aa). Residues Asp40, His244, His246, and Asn280 each contribute to the Mg(2+) site. Residues 437-575 are regulatory domain; the sequence is PVQASPDFSD…RFAGEEQGKG (139 aa).

Belongs to the alpha-IPM synthase/homocitrate synthase family. LeuA type 2 subfamily. In terms of assembly, homodimer. Mg(2+) is required as a cofactor.

It localises to the cytoplasm. It carries out the reaction 3-methyl-2-oxobutanoate + acetyl-CoA + H2O = (2S)-2-isopropylmalate + CoA + H(+). It participates in amino-acid biosynthesis; L-leucine biosynthesis; L-leucine from 3-methyl-2-oxobutanoate: step 1/4. Functionally, catalyzes the condensation of the acetyl group of acetyl-CoA with 3-methyl-2-oxobutanoate (2-ketoisovalerate) to form 3-carboxy-3-hydroxy-4-methylpentanoate (2-isopropylmalate). This chain is 2-isopropylmalate synthase, found in Herbaspirillum seropedicae (strain SmR1).